A 343-amino-acid chain; its full sequence is Putative ALA-interacting subunit 2 (343 aa).

A helical membrane pass occupies residues 43 to 63; the sequence is PISVITVFMLMGFVFIPIGLI. 4 N-linked (GlcNAc...) asparagine glycosylation sites follow: asparagine 103, asparagine 178, asparagine 191, and asparagine 218. Residues 301 to 321 traverse the membrane as a helical segment; the sequence is FLGITYLVVGSSSIVISIIFM.

This sequence belongs to the CDC50/LEM3 family. In terms of tissue distribution, expressed in roots, leaves, stems, flowers and siliques.

The protein localises to the membrane. The polypeptide is Putative ALA-interacting subunit 2 (ALIS2) (Arabidopsis thaliana (Mouse-ear cress)).